The primary structure comprises 298 residues: AFPQRVKVVEVGPRDGLQNEKSVVPTPVKIRLIDMLSETGLPVIEATSFVSPRWVPQMADHAEVMQGINKLPGVSYPVLTPNLKGFQAAVAAGAKEVSIFGAASELFTKKNINCSIEESLERFSEVMNAARAASIPVRGYVSCVLGCPYEGNISAAKVAEVSKKMYSMGCYEISLGDRIGIGTPGSMKEMLAAVMKEVPVGALAVHCHDTYGQALANILVALQMGVSVVDASVAGLGGCPYAQGASGNVATEDLVYMLNGLGIHTGVDLQKLMDTGTFICNALNRRTNSKVSQAACRL.

The Pyruvate carboxyltransferase domain occupies valine 6–methionine 273. Residue arginine 14 coordinates substrate. Aspartate 15 serves as a coordination point for a divalent metal cation. Position 21 is an N6-acetyllysine (lysine 21). 2 residues coordinate a divalent metal cation: histidine 206 and histidine 208. The active site involves cysteine 239. Asparagine 248 provides a ligand contact to a divalent metal cation. The Microbody targeting signal signature appears at cysteine 296–leucine 298.

The protein belongs to the HMG-CoA lyase family. In terms of assembly, homodimer; disulfide-linked. Can also form homotetramers.

The protein localises to the mitochondrion matrix. It is found in the peroxisome. It carries out the reaction (3S)-3-hydroxy-3-methylglutaryl-CoA = acetoacetate + acetyl-CoA. It participates in metabolic intermediate metabolism; (S)-3-hydroxy-3-methylglutaryl-CoA degradation; acetoacetate from (S)-3-hydroxy-3-methylglutaryl-CoA: step 1/1. Its function is as follows. Mitochondrial 3-hydroxy-3-methylglutaryl-CoA lyase that catalyzes a cation-dependent cleavage of (S)-3-hydroxy-3-methylglutaryl-CoA into acetyl-CoA and acetoacetate, a key step in ketogenesis. Terminal step in leucine catabolism. Ketone bodies (beta-hydroxybutyrate, acetoacetate and acetone) are essential as an alternative source of energy to glucose, as lipid precursors and as regulators of metabolism. In Gallus gallus (Chicken), this protein is Hydroxymethylglutaryl-CoA lyase, mitochondrial (HMGCL).